Here is a 167-residue protein sequence, read N- to C-terminus: MTERVCVGAIAGAFGVRGEVRLKSFTSQPNDIAGYSPLYTEDGNRSFTIRLTRPVTGGLGARLSGVETREQAEALKGVTLWADRDKLPALPDDEFYHADLIGLSVYDTGGALLGKVRAIYDHGAGDILEIFGPGRRQVLLLPFTRAFVPTVDLAAGRIVADPPEEQE.

The 75-residue stretch at 92–166 (DDEFYHADLI…RIVADPPEEQ (75 aa)) folds into the PRC barrel domain.

Belongs to the RimM family. In terms of assembly, binds ribosomal protein uS19.

The protein resides in the cytoplasm. Its function is as follows. An accessory protein needed during the final step in the assembly of 30S ribosomal subunit, possibly for assembly of the head region. Essential for efficient processing of 16S rRNA. May be needed both before and after RbfA during the maturation of 16S rRNA. It has affinity for free ribosomal 30S subunits but not for 70S ribosomes. In Paracoccus denitrificans (strain Pd 1222), this protein is Ribosome maturation factor RimM.